Here is a 679-residue protein sequence, read N- to C-terminus: DNA-directed RNA polymerase subunit beta' (679 aa).

Zn(2+) contacts are provided by cysteine 69, cysteine 71, cysteine 87, and cysteine 90. Aspartate 489, aspartate 491, and aspartate 493 together coordinate Mg(2+).

Belongs to the RNA polymerase beta' chain family. RpoC1 subfamily. As to quaternary structure, in plastids the minimal PEP RNA polymerase catalytic core is composed of four subunits: alpha, beta, beta', and beta''. When a (nuclear-encoded) sigma factor is associated with the core the holoenzyme is formed, which can initiate transcription. The cofactor is Mg(2+). Zn(2+) serves as cofactor.

It is found in the plastid. Its subcellular location is the chloroplast. The catalysed reaction is RNA(n) + a ribonucleoside 5'-triphosphate = RNA(n+1) + diphosphate. In terms of biological role, DNA-dependent RNA polymerase catalyzes the transcription of DNA into RNA using the four ribonucleoside triphosphates as substrates. This Phalaenopsis aphrodite subsp. formosana (Moth orchid) protein is DNA-directed RNA polymerase subunit beta'.